A 447-amino-acid polypeptide reads, in one-letter code: ATP-dependent protease ATPase subunit HslU (447 aa).

ATP-binding positions include Ile-17, 59–64, Asp-256, Glu-321, and Arg-393; that span reads GVGKTE.

This sequence belongs to the ClpX chaperone family. HslU subfamily. As to quaternary structure, a double ring-shaped homohexamer of HslV is capped on each side by a ring-shaped HslU homohexamer. The assembly of the HslU/HslV complex is dependent on binding of ATP.

It localises to the cytoplasm. Functionally, ATPase subunit of a proteasome-like degradation complex; this subunit has chaperone activity. The binding of ATP and its subsequent hydrolysis by HslU are essential for unfolding of protein substrates subsequently hydrolyzed by HslV. HslU recognizes the N-terminal part of its protein substrates and unfolds these before they are guided to HslV for hydrolysis. The polypeptide is ATP-dependent protease ATPase subunit HslU (Pseudomonas putida (strain W619)).